The sequence spans 444 residues: Glutamyl-tRNA reductase (444 aa).

Substrate is bound by residues 49–52 (TCNR), Ser109, 114–116 (ETQ), and Gln120. Cys50 functions as the Nucleophile in the catalytic mechanism. 189 to 194 (GAGKMG) contributes to the NADP(+) binding site.

Belongs to the glutamyl-tRNA reductase family. Homodimer.

It carries out the reaction (S)-4-amino-5-oxopentanoate + tRNA(Glu) + NADP(+) = L-glutamyl-tRNA(Glu) + NADPH + H(+). Its pathway is porphyrin-containing compound metabolism; protoporphyrin-IX biosynthesis; 5-aminolevulinate from L-glutamyl-tRNA(Glu): step 1/2. Its function is as follows. Catalyzes the NADPH-dependent reduction of glutamyl-tRNA(Glu) to glutamate 1-semialdehyde (GSA). The protein is Glutamyl-tRNA reductase of Bacillus cereus (strain AH187).